Here is a 197-residue protein sequence, read N- to C-terminus: Holliday junction branch migration complex subunit RuvA (197 aa).

Residues 1-63 (MYAYLKGIIT…EDAHLLYGFR (63 aa)) are domain I. Positions 64-142 (SEDEKKLFLS…VAGDGLPAKV (79 aa)) are domain II. The segment at 143-147 (AVQAS) is flexible linker. The domain III stretch occupies residues 148-197 (AENQELEEAMEAMLALGYKATELKKIKKFFEGTTDTAENYIKSALKMLVK).

It belongs to the RuvA family. As to quaternary structure, homotetramer. Forms an RuvA(8)-RuvB(12)-Holliday junction (HJ) complex. HJ DNA is sandwiched between 2 RuvA tetramers; dsDNA enters through RuvA and exits via RuvB. An RuvB hexamer assembles on each DNA strand where it exits the tetramer. Each RuvB hexamer is contacted by two RuvA subunits (via domain III) on 2 adjacent RuvB subunits; this complex drives branch migration. In the full resolvosome a probable DNA-RuvA(4)-RuvB(12)-RuvC(2) complex forms which resolves the HJ.

It localises to the cytoplasm. Functionally, the RuvA-RuvB-RuvC complex processes Holliday junction (HJ) DNA during genetic recombination and DNA repair, while the RuvA-RuvB complex plays an important role in the rescue of blocked DNA replication forks via replication fork reversal (RFR). RuvA specifically binds to HJ cruciform DNA, conferring on it an open structure. The RuvB hexamer acts as an ATP-dependent pump, pulling dsDNA into and through the RuvAB complex. HJ branch migration allows RuvC to scan DNA until it finds its consensus sequence, where it cleaves and resolves the cruciform DNA. The polypeptide is Holliday junction branch migration complex subunit RuvA (Streptococcus pneumoniae serotype 2 (strain D39 / NCTC 7466)).